The following is a 470-amino-acid chain: Choline/ethanolamine transporter flvcr2a (470 aa).

The Cytoplasmic portion of the chain corresponds to 1-23 (MCDKADNHIDVQPEGNLEVSSVS). A helical membrane pass occupies residues 24-48 (STRLYRRRWVILLLFSSYSLCNAFQ). 3 residues coordinate choline: Asn45, Ala46, and Trp49. The Extracellular segment spans residues 49 to 66 (WIQYGIINNIFMKFYQVS). Residues 67-94 (SFAVDWLSMVYMLTYIPFIFPVTWLLER) form a helical membrane-spanning segment. At 95-96 (KG) the chain is on the cytoplasmic side. Residues 97–116 (LRVVALLAASINCAGTWIKV) traverse the membrane as a helical segment. The Extracellular portion of the chain corresponds to 117-123 (ASVQPSL). The helical transmembrane segment at 124–152 (FWVTMLGQFACSCAQVFILGMPSQVASVW) threads the bilayer. Choline-binding residues include Gln138 and Leu142. The Cytoplasmic segment spans residues 153-157 (FGSDE). Residues 158 to 183 (VSTACAIGVFGNQLGIAIGFLVPPVL) traverse the membrane as a helical segment. The Extracellular portion of the chain corresponds to 184–188 (VPNVE). Residues 189 to 218 (DMGELAEHISIMFYITAAVATLIFLLVVFV) traverse the membrane as a helical segment. Topologically, residues 219 to 254 (FQEKPETPPSLAQVALRNMPTGQHSYLASIARLMCN) are cytoplasmic. The helical transmembrane segment at 255-285 (KPFILLLISYGLNVGSFYAVSTLLNRMIIEH) threads the bilayer. Residue Tyr272 participates in choline binding. The Extracellular segment spans residues 286-289 (YPGE). The chain crosses the membrane as a helical span at residues 290 to 318 (EVNAGRIGLTLVVAGVVGSLICGVWLDKT). The Cytoplasmic portion of the chain corresponds to 319–320 (KT). The chain crosses the membrane as a helical span at residues 321 to 343 (YKQTTLSVYLLSFVGMLIYSFTL). The Extracellular segment spans residues 344–346 (NLG). A helical membrane pass occupies residues 347 to 376 (HLWLVFLTSGVLGFFMTGYLPLGFEFAVEL). Residues 377-384 (TYPESEGT) lie on the Cytoplasmic side of the membrane. A helical transmembrane segment spans residues 385–410 (SSGLLNCSAQVFGIAFTIIQGKIIDH). A choline-binding site is contributed by Gln394. Over 411–412 (FG) the chain is Extracellular. Residues 413–435 (TLAGNIFLCVFLLIGSIMTAFIK) traverse the membrane as a helical segment. Residues 436–470 (SDLRRQKANQETGGNADSSVHPQHGETLPVKEVKM) lie on the Cytoplasmic side of the membrane. Residues 445 to 456 (QETGGNADSSVH) are compositionally biased toward polar residues. The interval 445–470 (QETGGNADSSVHPQHGETLPVKEVKM) is disordered.

The protein belongs to the major facilitator superfamily. Feline leukemia virus subgroup C receptor (TC 2.A.1.28.1) family.

The protein resides in the cell membrane. It is found in the mitochondrion membrane. It localises to the endoplasmic reticulum membrane. It catalyses the reaction choline(out) = choline(in). The enzyme catalyses ethanolamine(in) = ethanolamine(out). It carries out the reaction heme b(in) = heme b(out). In terms of biological role, choline uniporter that specifically mediates choline uptake at the blood-brain-barrier. Responsible for the majority of choline uptake across the blood-brain-barrier from the circulation into the brain. Choline, a nutrient critical for brain development, is a precursor of phosphatidylcholine, as well as betaine. Also mediates transport of ethanolamine. Choline and ethanolamine transport is not coupled with proton transport and is exclusively driven by the choline gradient across the plasma membrane. Also acts as a heme b transporter. This is Choline/ethanolamine transporter flvcr2a from Danio rerio (Zebrafish).